Here is a 743-residue protein sequence, read N- to C-terminus: Apo-petrobactin exporter (743 aa).

The next 12 membrane-spanning stretches (helical) occupy residues 20–40 (WITL…LPQV), 199–219 (ADVK…ILLY), 223–243 (ILAI…SPTL), 258–278 (AISI…LFLI), 303–323 (GGAI…LLLA), 337–357 (VAVF…LLIF), 406–426 (WTII…VPRI), 561–581 (DEAV…LVYL), 584–604 (IVAM…ALGA), 613–633 (MGAP…LVAL), 672–692 (AGLI…QVLV), and 694–714 (FGIV…PLLV).

Belongs to the resistance-nodulation-cell division (RND) (TC 2.A.6) family. MmpL subfamily.

It is found in the cell membrane. Its function is as follows. Exports the siderophore petrobactin. The chain is Apo-petrobactin exporter from Bacillus anthracis.